A 223-amino-acid polypeptide reads, in one-letter code: Adenylate kinase (223 aa).

10-15 (GSGKGT) is a binding site for ATP. Residues 30–59 (ESGAIFREHIGGGTELGKKAKAYIDRGDLV) are NMP. AMP-binding positions include Ser31, Arg36, 57 to 59 (DLV), 84 to 87 (GFPR), and Gln91. The LID stretch occupies residues 125 to 164 (GRRLCKNNNNHPNNIFIEAIKPNGDVCRVCGGTLSSRSDD). ATP is bound at residue Arg126. AMP is bound by residues Arg161 and Arg173. Gly209 lines the ATP pocket.

It belongs to the adenylate kinase family. Monomer.

The protein resides in the cytoplasm. The enzyme catalyses AMP + ATP = 2 ADP. It functions in the pathway purine metabolism; AMP biosynthesis via salvage pathway; AMP from ADP: step 1/1. Its function is as follows. Catalyzes the reversible transfer of the terminal phosphate group between ATP and AMP. Plays an important role in cellular energy homeostasis and in adenine nucleotide metabolism. The chain is Adenylate kinase from Desulfovibrio desulfuricans (strain ATCC 27774 / DSM 6949 / MB).